Consider the following 305-residue polypeptide: MRHPREENSIVVELEPSLATFIKQGFNNLVKWPLLNIGIVLSNTSTAINEEWLTVVEHIPTMKIFYKHIHKILTREMGFLVYLKRSQSERDNYITLYDFDYYIIDKDTNSVTMVDKPTELKETLLHVFQEYRLKSSQTIELIAFSSGTVINEDIVSKLTFLDVEVFNREYNNVKTIMNPDFVSRSPFIVISPMGKLTFFVEVYSWFDFKSCFKDIIDFLEGALIANIHNHMIKVGDCDETVSSYNPESGILFVNDLMTMNIVNFFGCNSRLESYHRFDITKVDVELFIKALSDACKKILLASNRL.

This sequence belongs to the poxviridae DNA-directed RNA polymerase 35 kDa subunit family. The DNA-dependent RNA polymerase used for intermediate and late genes expression consists of eight subunits 147 kDa, 133 kDa, 35 kDa, 30 kDa, 22 kDa, 19 kDa, 18 kDa and 7 kDa totalling more than 500 kDa in mass. The same holoenzyme, with the addition of the transcription-specificity factor RAP94, is used for early gene expression.

The protein localises to the virion. The enzyme catalyses RNA(n) + a ribonucleoside 5'-triphosphate = RNA(n+1) + diphosphate. Functionally, part of the DNA-dependent RNA polymerase which catalyzes the transcription of viral DNA into RNA using the four ribonucleoside triphosphates as substrates. Responsible for the transcription of early, intermediate and late genes. DNA-dependent RNA polymerase associates with the early transcription factor (ETF), itself composed of D6 and A7, thereby allowing the early genes transcription. Late transcription, and probably also intermediate transcription, require newly synthesized RNA polymerase. The chain is DNA-directed RNA polymerase 35 kDa subunit (OPG156) from Variola virus (isolate Human/India/Ind3/1967) (VARV).